The following is a 241-amino-acid chain: Nopaline transport system permease protein NocM (241 aa).

Residues 17 to 215 (VPTTLTLAFI…FITFVVSRLV (199 aa)) form the ABC transmembrane type-1 domain. The next 5 helical transmembrane spans lie at 21–41 (LTLA…VALM), 52–72 (LAYG…MFLI), 95–115 (PWFC…SEII), 161–181 (VMLI…EVTG), and 191–211 (YSPV…TFVV).

The protein belongs to the binding-protein-dependent transport system permease family. HisMQ subfamily.

It localises to the cell inner membrane. Component of the nopaline active transport system probably consisting of four subunits: Q, M, P and T. This system is also capable of transporting octopine provided that catabolic functions are induced with nopaline. The polypeptide is Nopaline transport system permease protein NocM (nocM) (Agrobacterium fabrum (strain C58 / ATCC 33970) (Agrobacterium tumefaciens (strain C58))).